Here is a 100-residue protein sequence, read N- to C-terminus: Esterase PE11 (100 aa).

Residues 4 to 94 enclose the PE domain; sequence VTTRPDSIGE…TSYWLTELAN (91 aa).

The protein belongs to the mycobacterial PE family.

It localises to the secreted. The protein resides in the cell wall. It carries out the reaction an acetyl ester + H2O = an aliphatic alcohol + acetate + H(+). The catalysed reaction is a butanoate ester + H2O = an aliphatic alcohol + butanoate + H(+). It catalyses the reaction an octanoate ester + H2O = an aliphatic alcohol + octanoate + H(+). Involved in cell wall lipids remodeling and in virulence. Restricts the biofilm growth and is essential for the optimal intracellular survival of M.tuberculosis. Shows esterase activity with a preference for short-chain esters, particularly pNP-acetate (C2) and pNP-butyrate (C4). Has weaker activity with pNP-octanoate (C8), pNP-laurate (C12) and pNP-myristate (C14). Shows weak long-chain triacylglycerol (TAG) hydrolase activity in vitro. Not necessary for PPE17 stability or for its localization on the mycobacterial surface. This Mycobacterium tuberculosis (strain ATCC 25618 / H37Rv) protein is Esterase PE11.